The primary structure comprises 910 residues: Eukaryotic translation initiation factor 3 subunit C (910 aa).

The segment at 1 to 21 (MSRFFANGSESESESSEEEIQ) is disordered. Residues 11–20 (SESESSEEEI) show a composition bias toward acidic residues. Residues S34, S165, S176, and S185 each carry the phosphoserine modification. The tract at residues 157–281 (FREAPDQESE…KRAEDDEDGE (125 aa)) is disordered. Acidic residues predominate over residues 162 to 186 (DQESEAEDEVVALESDGGDAGDDSD). Positions 193-207 (EAAPKAVKSAPAKAA) are enriched in low complexity. Positions 209–235 (ADDDDSDDSIDWDSDSESETESSDDEN) are enriched in acidic residues. Residues 240 to 268 (MRERFLKRTTEKEEKDDDKRKDKRKEQKT) show a composition bias toward basic and acidic residues. Residues 639–815 (FHMHINLELL…ETVGMHRSEP (177 aa)) form the PCI domain. The segment at 847 to 910 (FFQRGNMGNR…QQQVQTIDEE (64 aa)) is disordered. Residues 862 to 874 (NRNQNNQGGNWLG) are compositionally biased toward low complexity. A compositionally biased stretch (basic residues) spans 882–891 (RNRNQRGHHK). The span at 895 to 910 (DRQQQQQQQVQTIDEE) shows a compositional bias: low complexity.

It belongs to the eIF-3 subunit C family. In terms of assembly, component of the eukaryotic translation initiation factor 3 (eIF-3) complex. The eIF-3 complex interacts with pix.

The protein localises to the cytoplasm. Component of the eukaryotic translation initiation factor 3 (eIF-3) complex, which is involved in protein synthesis of a specialized repertoire of mRNAs and, together with other initiation factors, stimulates binding of mRNA and methionyl-tRNAi to the 40S ribosome. The eIF-3 complex specifically targets and initiates translation of a subset of mRNAs involved in cell proliferation. The polypeptide is Eukaryotic translation initiation factor 3 subunit C (Drosophila sechellia (Fruit fly)).